Consider the following 619-residue polypeptide: UPF0329 protein ECU08_2070 (619 aa).

Composition is skewed to basic and acidic residues over residues 350–359 (EREKREESKG) and 369–385 (GAGEAKEESKEEDRKEE). The tract at residues 350-425 (EREKREESKG…REKKMGEEHH (76 aa)) is disordered. Acidic residues predominate over residues 386–396 (EGVEVEEEESA).

It belongs to the UPF0329 family.

The chain is UPF0329 protein ECU08_2070 from Encephalitozoon cuniculi (strain GB-M1) (Microsporidian parasite).